The chain runs to 742 residues: G2/M phase-specific E3 ubiquitin-protein ligase (742 aa).

Residues 10 to 50 form a C2HC pre-PHD-type zinc finger; the sequence is SPPCVLCGWTDNCPEKYGEKRTYVEYNLTLHNYCLLMSSGI. The segment at 78 to 127 adopts a PHD-type 1 zinc-finger fold; that stretch reads LMCNICRKKGASIGCVAPKCKRSYHFPCGLQKECVFQFMEDFRSYCWEHK. The PHD-type 2; degenerate zinc finger occupies 142–192; sequence QCTICLDLVEHLPLYSVLRSPCCKNTWFHRECLQYQALSAGIFFFRCAVCN. The segment at 236 to 285 adopts a PHD-type 3 zinc-finger fold; that stretch reads RCLCKNGRDYNKPDSKWEIKRCQSCGSRGTHLACSSIKSWEQNWECVECR. Positions 417-742 constitute an HECT domain; sequence KGFRQRNFRP…IRSTLRGERE (326 aa).

It localises to the nucleus. The protein localises to the nucleolus. It is found in the cytoplasm. It catalyses the reaction S-ubiquitinyl-[E2 ubiquitin-conjugating enzyme]-L-cysteine + [acceptor protein]-L-lysine = [E2 ubiquitin-conjugating enzyme]-L-cysteine + N(6)-ubiquitinyl-[acceptor protein]-L-lysine.. It participates in protein modification; protein ubiquitination. Its function is as follows. E3 ubiquitin-protein ligase which accepts ubiquitin from an E2 ubiquitin-conjugating enzyme in the form of a thioester and then directly transfers the ubiquitin to targeted substrates. Essential in early embryonic development to prevent apoptotic death. This is G2/M phase-specific E3 ubiquitin-protein ligase (G2E3) from Gallus gallus (Chicken).